The primary structure comprises 85 residues: Putative membrane protein insertion efficiency factor (85 aa).

This sequence belongs to the UPF0161 family.

The protein resides in the cell inner membrane. In terms of biological role, could be involved in insertion of integral membrane proteins into the membrane. The polypeptide is Putative membrane protein insertion efficiency factor (Shewanella sediminis (strain HAW-EB3)).